Here is a 468-residue protein sequence, read N- to C-terminus: ATP synthase subunit beta (468 aa).

155-162 (GGAGVGKT) provides a ligand contact to ATP.

This sequence belongs to the ATPase alpha/beta chains family. In terms of assembly, F-type ATPases have 2 components, CF(1) - the catalytic core - and CF(0) - the membrane proton channel. CF(1) has five subunits: alpha(3), beta(3), gamma(1), delta(1), epsilon(1). CF(0) has three main subunits: a(1), b(2) and c(9-12). The alpha and beta chains form an alternating ring which encloses part of the gamma chain. CF(1) is attached to CF(0) by a central stalk formed by the gamma and epsilon chains, while a peripheral stalk is formed by the delta and b chains.

The protein localises to the cell inner membrane. The enzyme catalyses ATP + H2O + 4 H(+)(in) = ADP + phosphate + 5 H(+)(out). Its function is as follows. Produces ATP from ADP in the presence of a proton gradient across the membrane. The catalytic sites are hosted primarily by the beta subunits. The sequence is that of ATP synthase subunit beta from Bdellovibrio bacteriovorus (strain ATCC 15356 / DSM 50701 / NCIMB 9529 / HD100).